The following is an 885-amino-acid chain: Phycobiliprotein ApcE (885 aa).

Cys-185 contacts (2R,3E)-phycocyanobilin. 3 consecutive PBS-linker domains span residues 242 to 422, 498 to 680, and 694 to 871; these read DVQG…FRKV, KSIG…NSKK, and NSIQ…KQSS.

The protein belongs to the phycobilisome linker protein family. In terms of processing, contains one covalently linked bilin chromophore. This protein autochromophorylates (Potential).

Its subcellular location is the plastid. It is found in the chloroplast thylakoid membrane. In terms of biological role, this protein is postulated to act both as terminal energy acceptor and as a linker polypeptide that stabilizes the phycobilisome architecture. May have intrinsic bilin lyase activity. The sequence is that of Phycobiliprotein ApcE (apcE) from Aglaothamnion neglectum (Red alga).